A 287-amino-acid chain; its full sequence is 4-hydroxybenzoate octaprenyltransferase (287 aa).

A run of 7 helical transmembrane segments spans residues 30–50, 92–112, 133–153, 158–178, 207–227, 232–252, and 266–286; these read ALWI…FALG, IAIA…LNGL, FFAI…PMAF, DTVP…SVAY, VLAI…LGAA, WPYW…YTLI, and HNNW…ALAV.

This sequence belongs to the UbiA prenyltransferase family. The cofactor is Mg(2+).

The protein resides in the cell inner membrane. It carries out the reaction all-trans-octaprenyl diphosphate + 4-hydroxybenzoate = 4-hydroxy-3-(all-trans-octaprenyl)benzoate + diphosphate. It functions in the pathway cofactor biosynthesis; ubiquinone biosynthesis. Its function is as follows. Catalyzes the prenylation of para-hydroxybenzoate (PHB) with an all-trans polyprenyl group. Mediates the second step in the final reaction sequence of ubiquinone-8 (UQ-8) biosynthesis, which is the condensation of the polyisoprenoid side chain with PHB, generating the first membrane-bound Q intermediate 3-octaprenyl-4-hydroxybenzoate. The chain is 4-hydroxybenzoate octaprenyltransferase from Burkholderia pseudomallei (strain 1106a).